A 255-amino-acid polypeptide reads, in one-letter code: Leucyl/phenylalanyl-tRNA--protein transferase (255 aa).

This sequence belongs to the L/F-transferase family.

The protein localises to the cytoplasm. It carries out the reaction N-terminal L-lysyl-[protein] + L-leucyl-tRNA(Leu) = N-terminal L-leucyl-L-lysyl-[protein] + tRNA(Leu) + H(+). It catalyses the reaction N-terminal L-arginyl-[protein] + L-leucyl-tRNA(Leu) = N-terminal L-leucyl-L-arginyl-[protein] + tRNA(Leu) + H(+). The catalysed reaction is L-phenylalanyl-tRNA(Phe) + an N-terminal L-alpha-aminoacyl-[protein] = an N-terminal L-phenylalanyl-L-alpha-aminoacyl-[protein] + tRNA(Phe). Functions in the N-end rule pathway of protein degradation where it conjugates Leu, Phe and, less efficiently, Met from aminoacyl-tRNAs to the N-termini of proteins containing an N-terminal arginine or lysine. The protein is Leucyl/phenylalanyl-tRNA--protein transferase of Burkholderia pseudomallei (strain 668).